We begin with the raw amino-acid sequence, 58 residues long: MAVPKKRTSRSKTRIKKQIWKSQADKMALKALSLAKSVLSGKSKSFSYDVVEKSIDTN.

This sequence belongs to the bacterial ribosomal protein bL32 family.

The protein localises to the plastid. Its subcellular location is the chloroplast. In Chaetosphaeridium globosum (Charophycean green alga), this protein is Large ribosomal subunit protein bL32c.